A 321-amino-acid polypeptide reads, in one-letter code: Transaldolase (321 aa).

The active-site Schiff-base intermediate with substrate is Lys-132.

Belongs to the transaldolase family. Type 1 subfamily. Homodimer.

It is found in the cytoplasm. It catalyses the reaction D-sedoheptulose 7-phosphate + D-glyceraldehyde 3-phosphate = D-erythrose 4-phosphate + beta-D-fructose 6-phosphate. Its pathway is carbohydrate degradation; pentose phosphate pathway; D-glyceraldehyde 3-phosphate and beta-D-fructose 6-phosphate from D-ribose 5-phosphate and D-xylulose 5-phosphate (non-oxidative stage): step 2/3. Functionally, transaldolase is important for the balance of metabolites in the pentose-phosphate pathway. This chain is Transaldolase, found in Rhizobium etli (strain CIAT 652).